We begin with the raw amino-acid sequence, 202 residues long: ATP-dependent Clp protease proteolytic subunit (202 aa).

S101 serves as the catalytic Nucleophile. H126 is an active-site residue.

It belongs to the peptidase S14 family. Component of the chloroplastic Clp protease core complex.

The protein resides in the plastid. It is found in the chloroplast stroma. The enzyme catalyses Hydrolysis of proteins to small peptides in the presence of ATP and magnesium. alpha-casein is the usual test substrate. In the absence of ATP, only oligopeptides shorter than five residues are hydrolyzed (such as succinyl-Leu-Tyr-|-NHMec, and Leu-Tyr-Leu-|-Tyr-Trp, in which cleavage of the -Tyr-|-Leu- and -Tyr-|-Trp bonds also occurs).. In terms of biological role, cleaves peptides in various proteins in a process that requires ATP hydrolysis. Has a chymotrypsin-like activity. Plays a major role in the degradation of misfolded proteins. This chain is ATP-dependent Clp protease proteolytic subunit, found in Buxus microphylla (Littleleaf boxwood).